Here is a 130-residue protein sequence, read N- to C-terminus: Small ribosomal subunit protein uS8 (130 aa).

The protein belongs to the universal ribosomal protein uS8 family. Part of the 30S ribosomal subunit. Contacts proteins S5 and S12.

Functionally, one of the primary rRNA binding proteins, it binds directly to 16S rRNA central domain where it helps coordinate assembly of the platform of the 30S subunit. The polypeptide is Small ribosomal subunit protein uS8 (Stutzerimonas stutzeri (strain A1501) (Pseudomonas stutzeri)).